The sequence spans 248 residues: Adenosylcobinamide-GDP ribazoletransferase (248 aa).

Helical transmembrane passes span 24-44 (EINL…IGAW), 70-90 (IIIT…GLFS), 106-126 (VGAN…SLFL), 134-154 (IGWL…LLFA), 168-188 (IFLG…LVAL), 189-209 (GAFF…FTII), and 228-248 (AGGQ…WGLI).

Belongs to the CobS family. Mg(2+) serves as cofactor.

The protein localises to the cell membrane. The catalysed reaction is alpha-ribazole + adenosylcob(III)inamide-GDP = adenosylcob(III)alamin + GMP + H(+). It catalyses the reaction alpha-ribazole 5'-phosphate + adenosylcob(III)inamide-GDP = adenosylcob(III)alamin 5'-phosphate + GMP + H(+). The protein operates within cofactor biosynthesis; adenosylcobalamin biosynthesis; adenosylcobalamin from cob(II)yrinate a,c-diamide: step 7/7. Its function is as follows. Joins adenosylcobinamide-GDP and alpha-ribazole to generate adenosylcobalamin (Ado-cobalamin). Also synthesizes adenosylcobalamin 5'-phosphate from adenosylcobinamide-GDP and alpha-ribazole 5'-phosphate. The sequence is that of Adenosylcobinamide-GDP ribazoletransferase from Listeria monocytogenes serotype 4b (strain F2365).